The sequence spans 307 residues: Recombination-associated protein RdgC (307 aa).

It belongs to the RdgC family.

It is found in the cytoplasm. Its subcellular location is the nucleoid. In terms of biological role, may be involved in recombination. The protein is Recombination-associated protein RdgC of Colwellia psychrerythraea (strain 34H / ATCC BAA-681) (Vibrio psychroerythus).